A 201-amino-acid chain; its full sequence is Protein GrpE (201 aa).

Residues 1–11 (MTDSTNNQGTS) show a composition bias toward polar residues. The interval 1–40 (MTDSTNNQGTSGRPDDDHTTEEVASVFNDPGAQAPAGEPD) is disordered.

This sequence belongs to the GrpE family. In terms of assembly, homodimer.

It is found in the cytoplasm. In terms of biological role, participates actively in the response to hyperosmotic and heat shock by preventing the aggregation of stress-denatured proteins, in association with DnaK and GrpE. It is the nucleotide exchange factor for DnaK and may function as a thermosensor. Unfolded proteins bind initially to DnaJ; upon interaction with the DnaJ-bound protein, DnaK hydrolyzes its bound ATP, resulting in the formation of a stable complex. GrpE releases ADP from DnaK; ATP binding to DnaK triggers the release of the substrate protein, thus completing the reaction cycle. Several rounds of ATP-dependent interactions between DnaJ, DnaK and GrpE are required for fully efficient folding. The protein is Protein GrpE of Beijerinckia indica subsp. indica (strain ATCC 9039 / DSM 1715 / NCIMB 8712).